A 791-amino-acid chain; its full sequence is Protein SEY1 (791 aa).

Topologically, residues 1-685 (MSEDGASKCQ…KRSTIKSHTH (685 aa)) are cytoplasmic. The region spanning 40 to 268 (GLDYHVISVF…REDYYLSGKY (229 aa)) is the GB1/RHD3-type G domain. 50-57 (GSQSSGKS) is a binding site for GTP. Residues 686–706 (IPMWIYAIIAVLGWNEFMLVL) form a helical membrane-spanning segment. Residues 707 to 709 (RNP) are Lumenal-facing. The chain crosses the membrane as a helical span at residues 710-730 (LFIALMLLIVGAAYTVHRLNL). Residues 731–791 (WTPLATFASA…NETKENANES (61 aa)) lie on the Cytoplasmic side of the membrane. The disordered stretch occupies residues 763–791 (PKNASSKPVESFEMQDLSVNETKENANES).

Belongs to the TRAFAC class dynamin-like GTPase superfamily. GB1/RHD3 GTPase family. RHD3 subfamily.

Its subcellular location is the endoplasmic reticulum membrane. Its function is as follows. Cooperates with the reticulon proteins and tubule-shaping DP1 family proteins to generate and maintain the structure of the tubular endoplasmic reticulum network. Has GTPase activity, which is required for its function in ER organization. The sequence is that of Protein SEY1 from Eremothecium gossypii (strain ATCC 10895 / CBS 109.51 / FGSC 9923 / NRRL Y-1056) (Yeast).